Here is a 420-residue protein sequence, read N- to C-terminus: ATP phosphoribosyltransferase regulatory subunit (420 aa).

Belongs to the class-II aminoacyl-tRNA synthetase family. HisZ subfamily. Heteromultimer composed of HisG and HisZ subunits.

The protein localises to the cytoplasm. It functions in the pathway amino-acid biosynthesis; L-histidine biosynthesis; L-histidine from 5-phospho-alpha-D-ribose 1-diphosphate: step 1/9. Required for the first step of histidine biosynthesis. May allow the feedback regulation of ATP phosphoribosyltransferase activity by histidine. The sequence is that of ATP phosphoribosyltransferase regulatory subunit from Bacillus cereus (strain B4264).